The primary structure comprises 426 residues: Glutamate-1-semialdehyde 2,1-aminomutase (426 aa).

An N6-(pyridoxal phosphate)lysine modification is found at K265.

This sequence belongs to the class-III pyridoxal-phosphate-dependent aminotransferase family. HemL subfamily. Homodimer. Requires pyridoxal 5'-phosphate as cofactor.

It localises to the cytoplasm. It carries out the reaction (S)-4-amino-5-oxopentanoate = 5-aminolevulinate. It participates in porphyrin-containing compound metabolism; protoporphyrin-IX biosynthesis; 5-aminolevulinate from L-glutamyl-tRNA(Glu): step 2/2. The chain is Glutamate-1-semialdehyde 2,1-aminomutase from Actinobacillus pleuropneumoniae serotype 7 (strain AP76).